A 477-amino-acid chain; its full sequence is MAQEKKKGGVLPPDGGWGWMIVAGCFVVTVCTRAVTRCISIFFVEFQMHFAKDYSGTAWIHSLVDCTTMLCAPLGSLIGNQLSCRIAVILGGFLASVGLVLSSFATSLEYLYATLGLLTGLGFALCYTPAIAMVGIYFCERKALAYGIAMSGSGIGTFILAPVVQLLIEHYSWRGALLILGGFVLNLCVCGALLRPIILKEEEACPLPVDSECGYSVKPPTLNGGPTRSAASDAKQRCFQSMQEYHFLLMPDFLVLAGSFLLLASGCSLPFVYLVPYALDVGVGHQHAAFLMSILGVIDIVGNITFGWLTDRRCLKKYRNICYMFAVGMEGLCCLFIPLLRTFVWLVPFSVLYGYFDGAYVALIPVVTSDVVGRQYLSSALGVVYFLHAVPYLVSPPIGGWLVDTTGTYTATFFLSGFALISSSLLLFSVAIIRYCQRNQKKNSLSKIPKLVSCEGKQVDYYPPKNKDLMLIIPATS.

The Cytoplasmic portion of the chain corresponds to 1 to 9 (MAQEKKKGG). 12 helical membrane-spanning segments follow: residues 10 to 30 (VLPP…VVTV), 58 to 78 (AWIH…GSLI), 86 to 106 (IAVI…SFAT), 116 to 136 (GLLT…MVGI), 148 to 168 (IAMS…QLLI), 178 to 198 (LILG…RPII), 253 to 273 (FLVL…PFVY), 289 to 309 (AFLM…FGWL), 320 to 340 (NICY…IPLL), 344 to 364 (VWLV…VALI), 383 to 403 (VVYF…GWLV), and 413 to 433 (FFLS…VAII). Over 434–477 (RYCQRNQKKNSLSKIPKLVSCEGKQVDYYPPKNKDLMLIIPATS) the chain is Cytoplasmic.

Belongs to the major facilitator superfamily. Monocarboxylate porter (TC 2.A.1.13) family.

The protein localises to the cell membrane. It is found in the basolateral cell membrane. It catalyses the reaction creatine(in) = creatine(out). The catalysed reaction is guanidinoacetate(in) = guanidinoacetate(out). Functionally, functions as a transporter for creatine and as well for its precursor guanidinoacetate. Transport of creatine and GAA is independent of resting membrane potential and extracellular Na(+), Cl(-), or pH. Contributes to the process of creatine biosynthesis and distribution. The protein is Monocarboxylate transporter 12-B (slc16a12b) of Danio rerio (Zebrafish).